The chain runs to 689 residues: Acyl-coenzyme A oxidase 1 (689 aa).

The FAD site is built by threonine 149 and glycine 188. Glutamate 444 functions as the Proton acceptor in the catalytic mechanism.

The protein belongs to the acyl-CoA oxidase family. As to quaternary structure, heteropentamer composed of five different subunits. It depends on FAD as a cofactor.

Its subcellular location is the peroxisome. The enzyme catalyses a 2,3-saturated acyl-CoA + O2 = a (2E)-enoyl-CoA + H2O2. The protein operates within lipid metabolism; peroxisomal fatty acid beta-oxidation. The protein is Acyl-coenzyme A oxidase 1 (POX1) of Yarrowia lipolytica (strain CLIB 122 / E 150) (Yeast).